The sequence spans 333 residues: T-cell surface glycoprotein CD1c (333 aa).

Residues 1–17 (MLFLQFLLLALLLPGGD) form the signal peptide. At 18 to 302 (NADASQEHVS…ILYWGHHFSM (285 aa)) the chain is on the extracellular side. 4 N-linked (GlcNAc...) asparagine glycosylation sites follow: Asn38, Asn70, Asn75, and Asn146. 2 disulfide bridges follow: Cys120–Cys185 and Cys225–Cys280. Positions 206–296 (PEAWLSSRPS…LGGQDIILYW (91 aa)) constitute an Ig-like domain. A helical transmembrane segment spans residues 303–323 (NWIALVVIVPLVILIVLVLWF). The Cytoplasmic portion of the chain corresponds to 324–333 (KKHCSYQDIL). Positions 329–332 (YQDI) match the Internalization signal motif.

In terms of assembly, heterodimer with B2M (beta-2-microglobulin). As to expression, expressed on cortical thymocytes, on certain T-cell leukemias, and in various other tissues.

It localises to the cell membrane. The protein localises to the endosome membrane. It is found in the lysosome. In terms of biological role, antigen-presenting protein that binds self and non-self lipid and glycolipid antigens and presents them to T-cell receptors on natural killer T-cells. In Homo sapiens (Human), this protein is T-cell surface glycoprotein CD1c (CD1C).